A 379-amino-acid polypeptide reads, in one-letter code: Arginine biosynthesis bifunctional protein ArgJ (379 aa).

Substrate contacts are provided by Thr-140, Lys-160, Thr-171, Glu-249, Asn-374, and Thr-379. Thr-171 acts as the Nucleophile in catalysis.

This sequence belongs to the ArgJ family. Heterotetramer of two alpha and two beta chains.

It localises to the cytoplasm. The enzyme catalyses N(2)-acetyl-L-ornithine + L-glutamate = N-acetyl-L-glutamate + L-ornithine. It catalyses the reaction L-glutamate + acetyl-CoA = N-acetyl-L-glutamate + CoA + H(+). It participates in amino-acid biosynthesis; L-arginine biosynthesis; L-ornithine and N-acetyl-L-glutamate from L-glutamate and N(2)-acetyl-L-ornithine (cyclic): step 1/1. It functions in the pathway amino-acid biosynthesis; L-arginine biosynthesis; N(2)-acetyl-L-ornithine from L-glutamate: step 1/4. Its function is as follows. Catalyzes two activities which are involved in the cyclic version of arginine biosynthesis: the synthesis of N-acetylglutamate from glutamate and acetyl-CoA as the acetyl donor, and of ornithine by transacetylation between N(2)-acetylornithine and glutamate. The polypeptide is Arginine biosynthesis bifunctional protein ArgJ (Archaeoglobus fulgidus (strain ATCC 49558 / DSM 4304 / JCM 9628 / NBRC 100126 / VC-16)).